A 400-amino-acid chain; its full sequence is Serine/threonine-protein kinase AFC3 (400 aa).

The interval 1–29 is disordered; sequence MIANGFESMDKERVRKRPRMTWDEAPAEP. Residues 71-396 enclose the Protein kinase domain; it reads YKILSKMGEG…ANEALDHPFF (326 aa). Residues 77 to 85 and Lys100 contribute to the ATP site; that span reads MGEGTFGRV. Residue Asp196 is the Proton acceptor of the active site.

It belongs to the protein kinase superfamily. CMGC Ser/Thr protein kinase family. Lammer subfamily.

The catalysed reaction is L-seryl-[protein] + ATP = O-phospho-L-seryl-[protein] + ADP + H(+). The enzyme catalyses L-threonyl-[protein] + ATP = O-phospho-L-threonyl-[protein] + ADP + H(+). It catalyses the reaction L-tyrosyl-[protein] + ATP = O-phospho-L-tyrosyl-[protein] + ADP + H(+). The polypeptide is Serine/threonine-protein kinase AFC3 (AFC3) (Arabidopsis thaliana (Mouse-ear cress)).